Reading from the N-terminus, the 353-residue chain is Phospho-N-acetylmuramoyl-pentapeptide-transferase (353 aa).

Helical transmembrane passes span 22 to 42, 65 to 85, 88 to 108, 129 to 149, 161 to 181, 192 to 212, 228 to 248, 256 to 276, 281 to 301, and 330 to 350; these read FAFF…ITWA, TPTM…LFCI, DNIF…IGLI, LLAQ…SSEL, PLFD…ISSS, GLAT…LYLS, GLGE…GFLW, VFMG…LAII, ILLL…ILQV, and KIIV…LASI.

Belongs to the glycosyltransferase 4 family. MraY subfamily. Mg(2+) serves as cofactor.

The protein resides in the cell inner membrane. It carries out the reaction UDP-N-acetyl-alpha-D-muramoyl-L-alanyl-gamma-D-glutamyl-meso-2,6-diaminopimeloyl-D-alanyl-D-alanine + di-trans,octa-cis-undecaprenyl phosphate = di-trans,octa-cis-undecaprenyl diphospho-N-acetyl-alpha-D-muramoyl-L-alanyl-D-glutamyl-meso-2,6-diaminopimeloyl-D-alanyl-D-alanine + UMP. It participates in cell wall biogenesis; peptidoglycan biosynthesis. Functionally, catalyzes the initial step of the lipid cycle reactions in the biosynthesis of the cell wall peptidoglycan: transfers peptidoglycan precursor phospho-MurNAc-pentapeptide from UDP-MurNAc-pentapeptide onto the lipid carrier undecaprenyl phosphate, yielding undecaprenyl-pyrophosphoryl-MurNAc-pentapeptide, known as lipid I. The protein is Phospho-N-acetylmuramoyl-pentapeptide-transferase of Campylobacter jejuni subsp. jejuni serotype O:6 (strain 81116 / NCTC 11828).